The following is a 353-amino-acid chain: Protein XRP2 (353 aa).

The tract at residues 1-37 is disordered; the sequence is MGCFFSKKAKRKRNSEEEQPQQDGEEPKQYSWDKREK. G2 carries the N-myristoyl glycine lipid modification. Residue C3 is the site of S-palmitoyl cysteine attachment. Residues 25 to 37 are compositionally biased toward basic and acidic residues; it reads EEPKQYSWDKREK. One can recognise a C-CAP/cofactor C-like domain in the interval 27–182; it reads PKQYSWDKRE…TWSNIHDFTP (156 aa). GTP contacts are provided by residues 101–102 and 118–121; these read GS and QQFR.

This sequence belongs to the TBCC family. Post-translationally, myristoylated on Gly-2; which may be required for membrane targeting. In terms of processing, palmitoylated on Cys-3; which may be required for plasma membrane targeting.

The protein localises to the cell membrane. In terms of biological role, acts as a GTPase-activating protein (GAP) for tubulin in concert with tubulin-specific chaperone C, but does not enhance tubulin heterodimerization. Acts as a GTPase-activating protein. May act as guanine nucleotide dissociation inhibitor towards ADP-ribosylation factor-like proteins. The chain is Protein XRP2 (rp2) from Xenopus laevis (African clawed frog).